We begin with the raw amino-acid sequence, 459 residues long: Ribulose bisphosphate carboxylase large chain (459 aa).

Lys-4 carries the post-translational modification N6,N6,N6-trimethyllysine. Residues Asn-113 and Thr-163 each contribute to the substrate site. The active-site Proton acceptor is Lys-165. Lys-167 provides a ligand contact to substrate. Residues Lys-191, Asp-193, and Glu-194 each coordinate Mg(2+). Lys-191 is modified (N6-carboxylysine). His-284 serves as the catalytic Proton acceptor. Substrate is bound by residues Arg-285, His-317, and Ser-369.

The protein belongs to the RuBisCO large chain family. Type I subfamily. Heterohexadecamer of 8 large chains and 8 small chains; disulfide-linked. The disulfide link is formed within the large subunit homodimers. Mg(2+) serves as cofactor. The disulfide bond which can form in the large chain dimeric partners within the hexadecamer appears to be associated with oxidative stress and protein turnover.

The protein resides in the plastid. Its subcellular location is the chloroplast. It carries out the reaction 2 (2R)-3-phosphoglycerate + 2 H(+) = D-ribulose 1,5-bisphosphate + CO2 + H2O. The catalysed reaction is D-ribulose 1,5-bisphosphate + O2 = 2-phosphoglycolate + (2R)-3-phosphoglycerate + 2 H(+). Its function is as follows. RuBisCO catalyzes two reactions: the carboxylation of D-ribulose 1,5-bisphosphate, the primary event in carbon dioxide fixation, as well as the oxidative fragmentation of the pentose substrate in the photorespiration process. Both reactions occur simultaneously and in competition at the same active site. The chain is Ribulose bisphosphate carboxylase large chain from Parnassia fimbriata (Fringed grass-of-Parnassus).